The chain runs to 613 residues: Dihydroxy-acid dehydratase (613 aa).

Asp81 provides a ligand contact to Mg(2+). Cys122 provides a ligand contact to [2Fe-2S] cluster. Residues Asp123 and Lys124 each contribute to the Mg(2+) site. Residue Lys124 is modified to N6-carboxylysine. Position 195 (Cys195) interacts with [2Fe-2S] cluster. Glu491 is a Mg(2+) binding site. The active-site Proton acceptor is the Ser517.

The protein belongs to the IlvD/Edd family. As to quaternary structure, homodimer. It depends on [2Fe-2S] cluster as a cofactor. Requires Mg(2+) as cofactor.

It catalyses the reaction (2R)-2,3-dihydroxy-3-methylbutanoate = 3-methyl-2-oxobutanoate + H2O. The catalysed reaction is (2R,3R)-2,3-dihydroxy-3-methylpentanoate = (S)-3-methyl-2-oxopentanoate + H2O. Its pathway is amino-acid biosynthesis; L-isoleucine biosynthesis; L-isoleucine from 2-oxobutanoate: step 3/4. It functions in the pathway amino-acid biosynthesis; L-valine biosynthesis; L-valine from pyruvate: step 3/4. Functionally, functions in the biosynthesis of branched-chain amino acids. Catalyzes the dehydration of (2R,3R)-2,3-dihydroxy-3-methylpentanoate (2,3-dihydroxy-3-methylvalerate) into 2-oxo-3-methylpentanoate (2-oxo-3-methylvalerate) and of (2R)-2,3-dihydroxy-3-methylbutanoate (2,3-dihydroxyisovalerate) into 2-oxo-3-methylbutanoate (2-oxoisovalerate), the penultimate precursor to L-isoleucine and L-valine, respectively. The chain is Dihydroxy-acid dehydratase from Vibrio atlanticus (strain LGP32) (Vibrio splendidus (strain Mel32)).